The chain runs to 338 residues: Formamidase (338 aa).

The CN hydrolase domain maps to 14–257; the sequence is VGIGLVQLQL…NEIITAEVRP (244 aa). The active-site Proton acceptor is the E60. The active-site Proton donor is K129. C162 (nucleophile) is an active-site residue.

Belongs to the carbon-nitrogen hydrolase superfamily. Aliphatic amidase family.

It carries out the reaction formamide + H2O = formate + NH4(+). Is an aliphatic amidase with a restricted substrate specificity, as it only hydrolyzes formamide. This is Formamidase from Allorhizobium ampelinum (strain ATCC BAA-846 / DSM 112012 / S4) (Agrobacterium vitis (strain S4)).